The sequence spans 487 residues: NADH-quinone oxidoreductase subunit N (487 aa).

Transmembrane regions (helical) follow at residues 18 to 38 (LVPE…DLFV), 44 to 64 (VWTH…LATG), 84 to 104 (VMKT…WTYL), 116 to 136 (VLVL…SLLM), 169 to 189 (FVLG…VYGA), 211 to 231 (LLTG…AAPF), 242 to 262 (APAP…FGMA), 277 to 297 (WHLL…LMAI), 305 to 325 (MLAY…AGGG), 333 to 353 (MFYA…IIAL), 377 to 397 (AGLV…LGFW), 410 to 430 (DMLW…YYYL), and 457 to 477 (VLGV…PIMV).

It belongs to the complex I subunit 2 family. In terms of assembly, NDH-1 is composed of 14 different subunits. Subunits NuoA, H, J, K, L, M, N constitute the membrane sector of the complex.

Its subcellular location is the cell inner membrane. It catalyses the reaction a quinone + NADH + 5 H(+)(in) = a quinol + NAD(+) + 4 H(+)(out). NDH-1 shuttles electrons from NADH, via FMN and iron-sulfur (Fe-S) centers, to quinones in the respiratory chain. The immediate electron acceptor for the enzyme in this species is believed to be ubiquinone. Couples the redox reaction to proton translocation (for every two electrons transferred, four hydrogen ions are translocated across the cytoplasmic membrane), and thus conserves the redox energy in a proton gradient. The chain is NADH-quinone oxidoreductase subunit N from Xanthomonas euvesicatoria pv. vesicatoria (strain 85-10) (Xanthomonas campestris pv. vesicatoria).